The primary structure comprises 321 residues: Low affinity immunoglobulin epsilon Fc receptor (321 aa).

The Cytoplasmic portion of the chain corresponds to 1 to 21 (MEEGQYSEIEELPRRRCCRRG). Residues Cys17 and Cys18 are each lipidated (S-palmitoyl cysteine). The helical; Signal-anchor for type II membrane protein transmembrane segment at 22 to 47 (TQIVLLGLVTAALWAGLLTLLLLWHW) threads the bilayer. Residues 48-321 (DTTQSLKQLE…LPTPSAPLHS (274 aa)) are Extracellular-facing. The N-linked (GlcNAc...) asparagine glycan is linked to Asn63. A disordered region spans residues 66–85 (QVSKNLESHHGDQMAQKSQS). 3 consecutive repeats follow at residues 69-89 (KNLE…TQIS), 90-110 (QELE…LELS), and 111-131 (WNLN…LNER). Cystine bridges form between Cys160–Cys288, Cys163–Cys174, Cys191–Cys282, and Cys259–Cys273. A C-type lectin domain is found at 162-284 (TCPEKWINFQ…RKLGAWVCDR (123 aa)). Ca(2+) is bound by residues Glu249, Thr251, Asn269, and Asp270. The interval 290-321 (PPASEGSAESMGPDSRPDPDGRLPTPSAPLHS) is disordered. An O-linked (Xyl...) (chondroitin sulfate) serine glycan is attached at Ser296.

Homotrimer. Interacts (via C-type lectin domain) with IGHE (via CH3 region); this interaction regulates IgE homeostasis. Interacts (via the C-terminus) with CR2/CD21 (via Sushi domain 1 and 2). Post-translationally, N- and O-glycosylated. The secreted form sCD23 is produced by ADAM10-mediated ectodomain shedding. In terms of tissue distribution, detected in urine (at protein level).

It localises to the cell membrane. The protein resides in the secreted. Its function is as follows. Low-affinity receptor for immunoglobulin E (IgE) and CR2/CD21. Has essential roles in the regulation of IgE production and in the differentiation of B cells. On B cells, initiates IgE-dependent antigen uptake and presentation to T cells. On macrophages, upon IgE binding and antigen cross-linking induces intracellular killing of parasites through activation of L-Arginine-nitric oxide pathway. The sequence is that of Low affinity immunoglobulin epsilon Fc receptor (FCER2) from Homo sapiens (Human).